The primary structure comprises 115 residues: Photosystem II reaction center Psb28 protein (115 aa).

The protein belongs to the Psb28 family. As to quaternary structure, part of the photosystem II complex.

The protein resides in the plastid. It is found in the chloroplast thylakoid membrane. The polypeptide is Photosystem II reaction center Psb28 protein (Trieres chinensis (Marine centric diatom)).